The sequence spans 282 residues: Bifunctional protein FolD (282 aa).

NADP(+) is bound by residues 164–166 and Ser-189; that span reads GRS.

The protein belongs to the tetrahydrofolate dehydrogenase/cyclohydrolase family. Homodimer.

It catalyses the reaction (6R)-5,10-methylene-5,6,7,8-tetrahydrofolate + NADP(+) = (6R)-5,10-methenyltetrahydrofolate + NADPH. It carries out the reaction (6R)-5,10-methenyltetrahydrofolate + H2O = (6R)-10-formyltetrahydrofolate + H(+). It functions in the pathway one-carbon metabolism; tetrahydrofolate interconversion. Catalyzes the oxidation of 5,10-methylenetetrahydrofolate to 5,10-methenyltetrahydrofolate and then the hydrolysis of 5,10-methenyltetrahydrofolate to 10-formyltetrahydrofolate. The chain is Bifunctional protein FolD from Streptococcus suis (strain 98HAH33).